The chain runs to 209 residues: Uracil phosphoribosyltransferase (209 aa).

Residues Arg-79, Arg-104, and 131 to 139 each bind 5-phospho-alpha-D-ribose 1-diphosphate; that span reads DPMLATGGS. Uracil-binding positions include Ile-194 and 199–201; that span reads GDA. Asp-200 lines the 5-phospho-alpha-D-ribose 1-diphosphate pocket.

Belongs to the UPRTase family. Mg(2+) is required as a cofactor.

The enzyme catalyses UMP + diphosphate = 5-phospho-alpha-D-ribose 1-diphosphate + uracil. It functions in the pathway pyrimidine metabolism; UMP biosynthesis via salvage pathway; UMP from uracil: step 1/1. Allosterically activated by GTP. Its function is as follows. Catalyzes the conversion of uracil and 5-phospho-alpha-D-ribose 1-diphosphate (PRPP) to UMP and diphosphate. The polypeptide is Uracil phosphoribosyltransferase (Streptococcus thermophilus (strain CNRZ 1066)).